The sequence spans 232 residues: Protein Mis18-alpha (232 aa).

3 positions are modified to phosphoserine: S36, S39, and S40. The region spanning P79–L177 is the Mis18 domain. Positions 84, 87, 140, and 143 each coordinate Zn(2+). Residue K161 forms a Glycyl lysine isopeptide (Lys-Gly) (interchain with G-Cter in SUMO2) linkage. S232 bears the Phosphoserine mark.

Belongs to the mis18 family. Homodimer, and heterodimer with OIP5/MIS18B. Identified in a complex containing MIS18A, OIP5/MIS18B, MIS18BP1, RBBP7 and RBBP4.

The protein localises to the nucleus. It is found in the chromosome. It localises to the centromere. Its function is as follows. Required for recruitment of CENPA to centromeres and normal chromosome segregation during mitosis. The chain is Protein Mis18-alpha (MIS18A) from Pan troglodytes (Chimpanzee).